Reading from the N-terminus, the 414-residue chain is Tyrosine--tRNA ligase (414 aa).

Tyr-35 is a binding site for L-tyrosine. The 'HIGH' region signature appears at 40-49 (PTADSLHVGH). 2 residues coordinate L-tyrosine: Tyr-164 and Gln-168. The 'KMSKS' region motif lies at 226–230 (KFGKT). Lys-229 serves as a coordination point for ATP. The region spanning 347-414 (TKVIDALVEL…KKKYFVILVK (68 aa)) is the S4 RNA-binding domain.

The protein belongs to the class-I aminoacyl-tRNA synthetase family. TyrS type 1 subfamily. In terms of assembly, homodimer.

Its subcellular location is the cytoplasm. It carries out the reaction tRNA(Tyr) + L-tyrosine + ATP = L-tyrosyl-tRNA(Tyr) + AMP + diphosphate + H(+). Catalyzes the attachment of tyrosine to tRNA(Tyr) in a two-step reaction: tyrosine is first activated by ATP to form Tyr-AMP and then transferred to the acceptor end of tRNA(Tyr). This is Tyrosine--tRNA ligase from Mycoplasma capricolum subsp. capricolum (strain California kid / ATCC 27343 / NCTC 10154).